Reading from the N-terminus, the 419-residue chain is Serine hydroxymethyltransferase (419 aa).

(6S)-5,6,7,8-tetrahydrofolate is bound by residues L121 and 125-127; that span reads GHL. N6-(pyridoxal phosphate)lysine is present on K229. 354–356 serves as a coordination point for (6S)-5,6,7,8-tetrahydrofolate; it reads SPF.

Belongs to the SHMT family. As to quaternary structure, homodimer. Pyridoxal 5'-phosphate serves as cofactor.

It localises to the cytoplasm. It carries out the reaction (6R)-5,10-methylene-5,6,7,8-tetrahydrofolate + glycine + H2O = (6S)-5,6,7,8-tetrahydrofolate + L-serine. Its pathway is one-carbon metabolism; tetrahydrofolate interconversion. It functions in the pathway amino-acid biosynthesis; glycine biosynthesis; glycine from L-serine: step 1/1. Catalyzes the reversible interconversion of serine and glycine with tetrahydrofolate (THF) serving as the one-carbon carrier. This reaction serves as the major source of one-carbon groups required for the biosynthesis of purines, thymidylate, methionine, and other important biomolecules. Also exhibits THF-independent aldolase activity toward beta-hydroxyamino acids, producing glycine and aldehydes, via a retro-aldol mechanism. The chain is Serine hydroxymethyltransferase from Coxiella burnetii (strain RSA 493 / Nine Mile phase I).